A 188-amino-acid polypeptide reads, in one-letter code: uncharacterized protein (188 aa).

The segment at 133-153 (PKGRPTMKLQYPKMPPKPKTR) is disordered.

It belongs to the IS150/IS1296 orfA family.

This is an uncharacterized protein from Haemophilus influenzae (strain ATCC 51907 / DSM 11121 / KW20 / Rd).